The following is a 208-amino-acid chain: Large ribosomal subunit protein uL4 (208 aa).

Residues 45 to 85 (RQGTHKAKTRAQVRGGGRKPYRQKGTGNARQGSTRSPLMIG) form a disordered region. The span at 46 to 66 (QGTHKAKTRAQVRGGGRKPYR) shows a compositional bias: basic residues. Polar residues predominate over residues 69 to 80 (GTGNARQGSTRS).

It belongs to the universal ribosomal protein uL4 family. Part of the 50S ribosomal subunit.

Functionally, one of the primary rRNA binding proteins, this protein initially binds near the 5'-end of the 23S rRNA. It is important during the early stages of 50S assembly. It makes multiple contacts with different domains of the 23S rRNA in the assembled 50S subunit and ribosome. Its function is as follows. Forms part of the polypeptide exit tunnel. This is Large ribosomal subunit protein uL4 from Chlorobium phaeobacteroides (strain DSM 266 / SMG 266 / 2430).